The sequence spans 676 residues: Protein kinase C delta type (676 aa).

Residues 1-106 (MAPFLRIAFN…KNNGKAEFWL (106 aa)) form the C2 domain. Phosphothreonine occurs at positions 43 and 50. Tyr64 carries the phosphotyrosine modification. A Phosphoserine modification is found at Ser130. Residue Thr141 is modified to Phosphothreonine. At Tyr155 the chain carries Phosphotyrosine. The Phorbol-ester/DAG-type 1 zinc finger occupies 158-208 (NHEFIATFFGQPTFCSVCKDFVWGLNKQGYKCRQCNAAIHKKCIDKIIGRC). Thr218 bears the Phosphothreonine mark. The Phorbol-ester/DAG-type 2 zinc-finger motif lies at 230–280 (PHRFKVHNYMSPTFCDHCGSLLWGLVKQGLKCEDCGMNVHHKCREKVANLC). A phosphoserine; by autocatalysis mark is found at Ser299, Ser302, and Ser304. Ser307 carries the post-translational modification Phosphoserine. Residue Tyr313 is modified to Phosphotyrosine. Tyr334 is subject to Phosphotyrosine; by SRC. The Protein kinase domain occupies 349–603 (FIFHKVLGKG…TGNIKIHPFF (255 aa)). 355-363 (LGKGSFGKV) lines the ATP pocket. Position 374 is a phosphotyrosine (Tyr374). Lys378 contacts ATP. Residue Thr451 is modified to Phosphothreonine. Asp473 functions as the Proton acceptor in the catalytic mechanism. 2 positions are modified to phosphoserine: Ser503 and Ser506. Thr507 carries the phosphothreonine; by autocatalysis modification. Tyr567 bears the Phosphotyrosine mark. One can recognise an AGC-kinase C-terminal domain in the interval 604 to 675 (KTINWTLLEK…VNPKFEHLLE (72 aa)). Ser645, Ser654, Ser658, and Ser664 each carry phosphoserine.

Belongs to the protein kinase superfamily. AGC Ser/Thr protein kinase family. PKC subfamily. Interacts with PDPK1 (via N-terminal region). Interacts with RAD9A. Interacts with CDCP1. Interacts with MUC1. Interacts with VASP. Interacts with CAVIN3. Interacts with PRKD2 (via N-terminus and zing-finger domain 1 and 2) in response to oxidative stress; the interaction is independent of PRKD2 tyrosine phosphorylation. Interacts with PLSC3; interaction is enhanced by UV irradiation. Interacts with PRKCH upstream open reading frame 2; the interaction leads to inhibition of kinase activity. Autophosphorylated and/or phosphorylated at Thr-507, within the activation loop; phosphorylation at Thr-507 is not a prerequisite for enzymatic activity. Autophosphorylated at Ser-299, Ser-302 and Ser-304. Upon TNFSF10/TRAIL treatment, phosphorylated at Tyr-155; phosphorylation is required for its translocation to the endoplasmic reticulum and cleavage by caspase-3. Phosphorylated at Tyr-313, Tyr-334 and Tyr-567; phosphorylation of Tyr-313 and Tyr-567 following thrombin or zymosan stimulation potentiates its kinase activity. Phosphorylated by protein kinase PDPK1; phosphorylation is inhibited by the apoptotic C-terminal cleavage product of PKN2. Phosphorylated at Tyr-313 through a SYK and SRC mechanism downstream of C-type lectin receptors activation, promoting its activation. In terms of processing, proteolytically cleaved into a catalytic subunit and a regulatory subunit by caspase-3 during apoptosis which results in kinase activation.

It localises to the cytoplasm. The protein resides in the perinuclear region. It is found in the nucleus. Its subcellular location is the cell membrane. The protein localises to the mitochondrion. It localises to the endomembrane system. It carries out the reaction L-seryl-[protein] + ATP = O-phospho-L-seryl-[protein] + ADP + H(+). The enzyme catalyses L-threonyl-[protein] + ATP = O-phospho-L-threonyl-[protein] + ADP + H(+). The catalysed reaction is L-tyrosyl-[protein] + ATP = O-phospho-L-tyrosyl-[protein] + ADP + H(+). Its activity is regulated as follows. Novel PKCs (PRKCD, PRKCE, PRKCH and PRKCQ) are calcium-insensitive, but activated by diacylglycerol (DAG) and phosphatidylserine. Three specific sites; Thr-507 (activation loop of the kinase domain), Ser-645 (turn motif) and Ser-664 (hydrophobic region), need to be phosphorylated for its full activation. Activated by caspase-3 (CASP3) cleavage during apoptosis. After cleavage, the pseudosubstrate motif in the regulatory subunit is released from the substrate recognition site of the catalytic subunit, which enables PRKCD to become constitutively activated. The catalytic subunit which displays properties of a sphingosine-dependent protein kinase is activated by D-erythro-sphingosine (Sph) or N,N-dimethyl-D-erythrosphingosine (DMS) or N,N,N-trimethyl-D-erythrosphingosine (TMS), but not by ceramide or Sph-1-P and is strongly inhibited by phosphatidylserine. Inhibited by PRKCH upstream open reading frame 2. Its function is as follows. Calcium-independent, phospholipid- and diacylglycerol (DAG)-dependent serine/threonine-protein kinase that plays contrasting roles in cell death and cell survival by functioning as a pro-apoptotic protein during DNA damage-induced apoptosis, but acting as an anti-apoptotic protein during cytokine receptor-initiated cell death, is involved in tumor suppression as well as survival of several cancers, is required for oxygen radical production by NADPH oxidase and acts as positive or negative regulator in platelet functional responses. Negatively regulates B cell proliferation and also has an important function in self-antigen induced B cell tolerance induction. Upon DNA damage, activates the promoter of the death-promoting transcription factor BCLAF1/Btf to trigger BCLAF1-mediated p53/TP53 gene transcription and apoptosis. In response to oxidative stress, interact with and activate CHUK/IKKA in the nucleus, causing the phosphorylation of p53/TP53. In the case of ER stress or DNA damage-induced apoptosis, can form a complex with the tyrosine-protein kinase ABL1 which trigger apoptosis independently of p53/TP53. In cytosol can trigger apoptosis by activating MAPK11 or MAPK14, inhibiting AKT1 and decreasing the level of X-linked inhibitor of apoptosis protein (XIAP), whereas in nucleus induces apoptosis via the activation of MAPK8 or MAPK9. Upon ionizing radiation treatment, is required for the activation of the apoptosis regulators BAX and BAK, which trigger the mitochondrial cell death pathway. Can phosphorylate MCL1 and target it for degradation which is sufficient to trigger for BAX activation and apoptosis. Is required for the control of cell cycle progression both at G1/S and G2/M phases. Mediates phorbol 12-myristate 13-acetate (PMA)-induced inhibition of cell cycle progression at G1/S phase by up-regulating the CDK inhibitor CDKN1A/p21 and inhibiting the cyclin CCNA2 promoter activity. In response to UV irradiation can phosphorylate CDK1, which is important for the G2/M DNA damage checkpoint activation. Can protect glioma cells from the apoptosis induced by TNFSF10/TRAIL, probably by inducing increased phosphorylation and subsequent activation of AKT1. Is highly expressed in a number of cancer cells and promotes cell survival and resistance against chemotherapeutic drugs by inducing cyclin D1 (CCND1) and hyperphosphorylation of RB1, and via several pro-survival pathways, including NF-kappa-B, AKT1 and MAPK1/3 (ERK1/2). Involved in antifungal immunity by mediating phosphorylation and activation of CARD9 downstream of C-type lectin receptors activation, promoting interaction between CARD9 and BCL10, followed by activation of NF-kappa-B and MAP kinase p38 pathways. Can also act as tumor suppressor upon mitogenic stimulation with PMA or TPA. In N-formyl-methionyl-leucyl-phenylalanine (fMLP)-treated cells, is required for NCF1 (p47-phox) phosphorylation and activation of NADPH oxidase activity, and regulates TNF-elicited superoxide anion production in neutrophils, by direct phosphorylation and activation of NCF1 or indirectly through MAPK1/3 (ERK1/2) signaling pathways. May also play a role in the regulation of NADPH oxidase activity in eosinophil after stimulation with IL5, leukotriene B4 or PMA. In collagen-induced platelet aggregation, acts a negative regulator of filopodia formation and actin polymerization by interacting with and negatively regulating VASP phosphorylation. Downstream of PAR1, PAR4 and CD36/GP4 receptors, regulates differentially platelet dense granule secretion; acts as a positive regulator in PAR-mediated granule secretion, whereas it negatively regulates CD36/GP4-mediated granule release. Phosphorylates MUC1 in the C-terminal and regulates the interaction between MUC1 and beta-catenin. The catalytic subunit phosphorylates 14-3-3 proteins (YWHAB, YWHAZ and YWHAH) in a sphingosine-dependent fashion. Phosphorylates ELAVL1 in response to angiotensin-2 treatment. Phosphorylates mitochondrial phospholipid scramblase 3 (PLSCR3), resulting in increased cardiolipin expression on the mitochondrial outer membrane which facilitates apoptosis. Phosphorylates SMPD1 which induces SMPD1 secretion. In Homo sapiens (Human), this protein is Protein kinase C delta type.